The primary structure comprises 131 residues: Peptide methionine sulfoxide reductase MsrB (131 aa).

In terms of domain architecture, MsrB spans 8–130 (LEEWKQMLDP…NSVCLDLVPR (123 aa)). Residues Cys-47, Cys-50, Cys-96, and Cys-99 each contribute to the Zn(2+) site. Cys-119 acts as the Nucleophile in catalysis.

It belongs to the MsrB Met sulfoxide reductase family. It depends on Zn(2+) as a cofactor.

The enzyme catalyses L-methionyl-[protein] + [thioredoxin]-disulfide + H2O = L-methionyl-(R)-S-oxide-[protein] + [thioredoxin]-dithiol. This is Peptide methionine sulfoxide reductase MsrB from Pseudomonas syringae pv. syringae (strain B728a).